The following is a 134-amino-acid chain: Phosphoribosyl-AMP cyclohydrolase (134 aa).

Aspartate 80 is a binding site for Mg(2+). Cysteine 81 contributes to the Zn(2+) binding site. Aspartate 82 and aspartate 84 together coordinate Mg(2+). Positions 98 and 105 each coordinate Zn(2+).

The protein belongs to the PRA-CH family. In terms of assembly, homodimer. Requires Mg(2+) as cofactor. Zn(2+) is required as a cofactor.

The protein resides in the cytoplasm. The enzyme catalyses 1-(5-phospho-beta-D-ribosyl)-5'-AMP + H2O = 1-(5-phospho-beta-D-ribosyl)-5-[(5-phospho-beta-D-ribosylamino)methylideneamino]imidazole-4-carboxamide. It participates in amino-acid biosynthesis; L-histidine biosynthesis; L-histidine from 5-phospho-alpha-D-ribose 1-diphosphate: step 3/9. Functionally, catalyzes the hydrolysis of the adenine ring of phosphoribosyl-AMP. The sequence is that of Phosphoribosyl-AMP cyclohydrolase from Herminiimonas arsenicoxydans.